Reading from the N-terminus, the 139-residue chain is Small ribosomal subunit protein uS11 (139 aa).

Residues 1 to 33 (MPPAKKGPATSARKGQKTRRREKKNVPHGAAHI) form a disordered region. Residues 14 to 23 (KGQKTRRREK) show a composition bias toward basic residues.

It belongs to the universal ribosomal protein uS11 family. As to quaternary structure, part of the 30S ribosomal subunit. Interacts with proteins S7 and S18. Binds to IF-3.

Its function is as follows. Located on the platform of the 30S subunit, it bridges several disparate RNA helices of the 16S rRNA. Forms part of the Shine-Dalgarno cleft in the 70S ribosome. This chain is Small ribosomal subunit protein uS11, found in Mycobacterium bovis (strain ATCC BAA-935 / AF2122/97).